The primary structure comprises 160 residues: Large ribosomal subunit protein uL30m (160 aa).

A mitochondrion-targeting transit peptide spans 1-34 (MAGVLRSAFPRPPCRLQTVKKGAESLIGTEWIRH). The segment at 44 to 64 (KVFQPKPEDHEKYGGDPQNPH) is disordered.

Belongs to the universal ribosomal protein uL30 family. As to quaternary structure, component of the mitochondrial ribosome large subunit (39S) which comprises a 16S rRNA and about 50 distinct proteins.

The protein resides in the mitochondrion. In Mus musculus (Mouse), this protein is Large ribosomal subunit protein uL30m (Mrpl30).